Here is a 105-residue protein sequence, read N- to C-terminus: Pyrimidine/purine nucleoside phosphorylase (105 aa).

It belongs to the nucleoside phosphorylase PpnP family.

The catalysed reaction is a purine D-ribonucleoside + phosphate = a purine nucleobase + alpha-D-ribose 1-phosphate. The enzyme catalyses adenosine + phosphate = alpha-D-ribose 1-phosphate + adenine. It carries out the reaction cytidine + phosphate = cytosine + alpha-D-ribose 1-phosphate. It catalyses the reaction guanosine + phosphate = alpha-D-ribose 1-phosphate + guanine. The catalysed reaction is inosine + phosphate = alpha-D-ribose 1-phosphate + hypoxanthine. The enzyme catalyses thymidine + phosphate = 2-deoxy-alpha-D-ribose 1-phosphate + thymine. It carries out the reaction uridine + phosphate = alpha-D-ribose 1-phosphate + uracil. It catalyses the reaction xanthosine + phosphate = alpha-D-ribose 1-phosphate + xanthine. Its function is as follows. Catalyzes the phosphorolysis of diverse nucleosides, yielding D-ribose 1-phosphate and the respective free bases. Can use uridine, adenosine, guanosine, cytidine, thymidine, inosine and xanthosine as substrates. Also catalyzes the reverse reactions. The chain is Pyrimidine/purine nucleoside phosphorylase from Ralstonia pickettii (strain 12J).